The chain runs to 814 residues: Kinesin-like protein KIF6 (814 aa).

Residues 5 to 345 (TIQIFARVKP…CRFAQRVALI (341 aa)) form the Kinesin motor domain. 97–104 (GQTGSGKT) is a binding site for ATP. 3 coiled-coil regions span residues 356–385 (NPRL…QRTE), 456–494 (LKEE…EALH), and 588–683 (EAKA…KEFE). The interval 752 to 788 (LPSPCPSPHSQKQSSTSTPLEDSIPKRPVSSIPLTGD) is disordered. Polar residues predominate over residues 759–771 (PHSQKQSSTSTPL).

The protein belongs to the TRAFAC class myosin-kinesin ATPase superfamily. Kinesin family.

The protein resides in the cytoplasm. It is found in the cytoskeleton. This chain is Kinesin-like protein KIF6 (KIF6), found in Homo sapiens (Human).